A 927-amino-acid polypeptide reads, in one-letter code: UPF0182 protein bll7333 (927 aa).

Helical transmembrane passes span 17-37 (AVVG…LLAL), 65-85 (AVVF…NGWL), 134-154 (LALL…QFVY), 185-205 (WMML…LVHG), 220-240 (VIAH…WSFG), 264-284 (VGLP…LAAW), and 297-317 (AAFL…PVLF).

The protein belongs to the UPF0182 family.

It localises to the cell membrane. This Bradyrhizobium diazoefficiens (strain JCM 10833 / BCRC 13528 / IAM 13628 / NBRC 14792 / USDA 110) protein is UPF0182 protein bll7333.